Consider the following 163-residue polypeptide: Nucleotide-binding protein HS_0688 (163 aa).

This sequence belongs to the YajQ family.

In terms of biological role, nucleotide-binding protein. The chain is Nucleotide-binding protein HS_0688 from Histophilus somni (strain 129Pt) (Haemophilus somnus).